Here is a 716-residue protein sequence, read N- to C-terminus: MEKKKRELDIVLLLILLASAFLNIYNIWKDDTVNPYYTAAVTSMMQSFHNFFYASFDAAGFITVDKPPVTYQIQTISALIFGMHGWSVILPQALAGVGSVLLMYLLIKPTFGKTAARIASFVMACTPIAVAVARTNNVDALLVFFLLLATWLLFKAIRKGKLIWLLAAFFVVGVGFNTKMLQAYMILPAFLLFYLIAANATIKKKIVSLVSALAVLAAVSLSWPLIVDNIPASKRPYIGSSQTNSVLELAFGYNGIQRLTGQNSGGGQGAPNKDASKEMSSSDNTQAPPNQSSSNSSSSDGKSSNGNMAAPPSNGQMPSGGQGGPPSGGDGGQGGPGGDGGKGGTGTGSKMQSGSGMFGTGTPGPLRLFQQELSDQISWLLPFAIFGIAGLLIAGARERRRLSVEQKETVFWVAWLVPIAGFFSVAEFFHHYYLIMLAPPIAALVGAGWVALVHLYRNQTGWKAWLLPGAIIATTGFELFILRNYNDQIGVGWSIGVGVIGVLSAIALLLFKQRQKPFSYYVSLAALLALLVMPMYWASTPLLYGGNSSLPETGPQLASMSGKGMGMSDATVNEKLIKYLEENNSGAEYLFATTDSNTAAPYIIKTKKAVMAIGGYSGSDPAITLTQFKKLVKEGKVKYFLASGMGRGGNNDIVEWVEKNGKEVASEKWQSSSDQKTENTDSADTSSSKASGENGKMGGPGGMNQSATLYELHADE.

Helical transmembrane passes span 8–28 (LDIVLLLILLASAFLNIYNIW), 44–64 (MMQSFHNFFYASFDAAGFITV), 87–107 (SVILPQALAGVGSVLLMYLLI), 118–135 (IASFVMACTPIAVAVART), 137–157 (NVDALLVFFLLLATWLLFKAI), 159–179 (KGKLIWLLAAFFVVGVGFNTK), 180–200 (MLQAYMILPAFLLFYLIAANA), and 206–226 (IVSLVSALAVLAAVSLSWPLI). The disordered stretch occupies residues 260-363 (TGQNSGGGQG…GSGMFGTGTP (104 aa)). Residues 278-289 (EMSSSDNTQAPP) show a composition bias toward polar residues. Residues 290–307 (NQSSSNSSSSDGKSSNGN) show a composition bias toward low complexity. Gly residues predominate over residues 318–347 (PSGGQGGPPSGGDGGQGGPGGDGGKGGTGT). Transmembrane regions (helical) follow at residues 376–396 (QISWLLPFAIFGIAGLLIAGA), 409–429 (TVFWVAWLVPIAGFFSVAEFF), 433–453 (YLIMLAPPIAALVGAGWVALV), 462–482 (WKAWLLPGAIIATTGFELFIL), 491–511 (VGWSIGVGVIGVLSAIALLLF), and 518–538 (FSYYVSLAALLALLVMPMYWA). A disordered region spans residues 664 to 716 (VASEKWQSSSDQKTENTDSADTSSSKASGENGKMGGPGGMNQSATLYELHADE). A compositionally biased stretch (low complexity) spans 680-694 (TDSADTSSSKASGEN).

Belongs to the glycosyltransferase 39 family.

The protein localises to the cell membrane. This chain is Putative mannosyltransferase YkcB (ykcB), found in Bacillus subtilis (strain 168).